The sequence spans 451 residues: LisH domain-containing protein C1711.05 (451 aa).

The LisH domain occupies 6–38; the sequence is MKSKVCPLIYHFLQENGYVKTAQTFLKETGDKD. A disordered region spans residues 59–394; that stretch reads PYLTTEDVGK…VGDPSQWDFA (336 aa). The segment covering 73–98 has biased composition (basic and acidic residues); that stretch reads KESLEKSNDDSQKISKKGAPPEKAHS. The segment covering 99–120 has biased composition (low complexity); the sequence is SSEASGSGSSSDESDSSSSESE. The segment covering 135–145 has biased composition (acidic residues); the sequence is SESESSSEDSD. Residues 146–174 are compositionally biased toward low complexity; the sequence is SSSSSSDSESESSSEGSDSSSSSSSSESE. Positions 189–199 are enriched in acidic residues; the sequence is SESESSSEDSD. Residues 200-228 are compositionally biased toward low complexity; that stretch reads SSSSSSDSESESSSEGSDSSSSSSSSESE. 2 stretches are compositionally biased toward acidic residues: residues 243–253 and 278–300; these read SESESSSEDSD and DSEDDSSSDSSDSESESSSEDSD. Low complexity predominate over residues 301 to 319; the sequence is STSSSSDSDSSSSSEDGNS. Polar residues predominate over residues 320-332; that stretch reads NTDTTTSGEVSAQ. The span at 333 to 343 shows a compositional bias: low complexity; the sequence is SSTNSTSSEES. Basic and acidic residues predominate over residues 344 to 365; it reads TSVKDEDSSKIHDKSLKRKHED. Low complexity predominate over residues 369-380; sequence STSTKSSRTTKT.

It is found in the nucleus. Its subcellular location is the nucleolus. The chain is LisH domain-containing protein C1711.05 from Schizosaccharomyces pombe (strain 972 / ATCC 24843) (Fission yeast).